The primary structure comprises 1261 residues: Rho GTPase-activating protein 29 (1261 aa).

A phosphoserine mark is found at Ser-171, Ser-176, Ser-179, and Ser-190. Positions 192–462 (LELDNVLLKN…SAKLYDPGQE (271 aa)) constitute an F-BAR domain. The stretch at 296–418 (RKNEMEKQRK…EILAQLRTLV (123 aa)) forms a coiled coil. A disordered region spans residues 481 to 501 (NVNKHLNSSQPSGFGPANSLE). Residues Ser-499, Ser-519, and Ser-552 each carry the phosphoserine modification. Residues 541-559 (SESTGGSSESRSLDSESIS) are compositionally biased toward low complexity. Positions 541 to 600 (SESTGGSSESRSLDSESISPGDFHRKLPRTPSSGTMSSADDLDEREPPSPSETGPNSLGT) are disordered. The Phorbol-ester/DAG-type zinc finger occupies 612-657 (THKFRKLRSPTKCRDCEGIVVFQGVECEECLLVCHRKCLENLVIIC). The Rho-GAP domain occupies 671 to 886 (AEFTQVAKKE…FLITYSQKIF (216 aa)). 2 positions are modified to phosphoserine: Ser-913 and Ser-949. A disordered region spans residues 981–1011 (SASQKIEDGKTPKPLSLKSDRSTNNVERHTP). Residues 998–1010 (KSDRSTNNVERHT) show a composition bias toward basic and acidic residues. Phosphoserine is present on residues Ser-1019, Ser-1144, and Ser-1146. Disordered stretches follow at residues 1117-1153 (HSIN…APVR) and 1178-1238 (GNEE…VNPM). Basic and acidic residues predominate over residues 1133–1144 (RSVREASERRSS). The segment at 1258–1261 (PQFV) is interaction with PTPN13/PTPL1.

As to quaternary structure, interacts with PTPN13/PTPL1. Interacts with RAP2A via its coiled coil domain. Interacts with RASIP1. In terms of tissue distribution, widely expressed. Highly expressed in skeletal muscle and heart. Expressed at intermediate level in placenta, liver and pancreas. Weakly expressed in brain, lung and kidney.

Functionally, GTPase activator for the Rho-type GTPases by converting them to an inactive GDP-bound state. Has strong activity toward RHOA, and weaker activity toward RAC1 and CDC42. May act as a specific effector of RAP2A to regulate Rho. In concert with RASIP1, suppresses RhoA signaling and dampens ROCK and MYH9 activities in endothelial cells and plays an essential role in blood vessel tubulogenesis. The polypeptide is Rho GTPase-activating protein 29 (ARHGAP29) (Homo sapiens (Human)).